The following is a 347-amino-acid chain: N-acetyl-gamma-glutamyl-phosphate reductase (347 aa).

The active site involves Cys151.

It belongs to the NAGSA dehydrogenase family. Type 1 subfamily.

The protein resides in the cytoplasm. The enzyme catalyses N-acetyl-L-glutamate 5-semialdehyde + phosphate + NADP(+) = N-acetyl-L-glutamyl 5-phosphate + NADPH + H(+). It functions in the pathway amino-acid biosynthesis; L-arginine biosynthesis; N(2)-acetyl-L-ornithine from L-glutamate: step 3/4. Its function is as follows. Catalyzes the NADPH-dependent reduction of N-acetyl-5-glutamyl phosphate to yield N-acetyl-L-glutamate 5-semialdehyde. The protein is N-acetyl-gamma-glutamyl-phosphate reductase of Pelotomaculum thermopropionicum (strain DSM 13744 / JCM 10971 / SI).